The chain runs to 376 residues: UDP-N-acetylglucosamine--N-acetylmuramyl-(pentapeptide) pyrophosphoryl-undecaprenol N-acetylglucosamine transferase (376 aa).

UDP-N-acetyl-alpha-D-glucosamine is bound by residues 11–13 (TGG), N117, R160, S208, and Q310.

Belongs to the glycosyltransferase 28 family. MurG subfamily.

It is found in the cell inner membrane. The catalysed reaction is di-trans,octa-cis-undecaprenyl diphospho-N-acetyl-alpha-D-muramoyl-L-alanyl-D-glutamyl-meso-2,6-diaminopimeloyl-D-alanyl-D-alanine + UDP-N-acetyl-alpha-D-glucosamine = di-trans,octa-cis-undecaprenyl diphospho-[N-acetyl-alpha-D-glucosaminyl-(1-&gt;4)]-N-acetyl-alpha-D-muramoyl-L-alanyl-D-glutamyl-meso-2,6-diaminopimeloyl-D-alanyl-D-alanine + UDP + H(+). It participates in cell wall biogenesis; peptidoglycan biosynthesis. Functionally, cell wall formation. Catalyzes the transfer of a GlcNAc subunit on undecaprenyl-pyrophosphoryl-MurNAc-pentapeptide (lipid intermediate I) to form undecaprenyl-pyrophosphoryl-MurNAc-(pentapeptide)GlcNAc (lipid intermediate II). This Rickettsia rickettsii (strain Iowa) protein is UDP-N-acetylglucosamine--N-acetylmuramyl-(pentapeptide) pyrophosphoryl-undecaprenol N-acetylglucosamine transferase.